A 73-amino-acid polypeptide reads, in one-letter code: Sec-independent protein translocase protein TatA (73 aa).

Residues 1–21 (MFGLGAPELILILILALIIFG) form a helical membrane-spanning segment. Positions 52-73 (EAAKIDDGNNNSDKEKATRQAS) are disordered.

It belongs to the TatA/E family. As to quaternary structure, forms a complex with TatC.

It is found in the cell membrane. Part of the twin-arginine translocation (Tat) system that transports large folded proteins containing a characteristic twin-arginine motif in their signal peptide across membranes. TatA could form the protein-conducting channel of the Tat system. The protein is Sec-independent protein translocase protein TatA of Moorella thermoacetica (strain ATCC 39073 / JCM 9320).